A 328-amino-acid chain; its full sequence is Beta-ketoacyl-[acyl-carrier-protein] synthase III (328 aa).

Residues Cys-122 and His-255 contribute to the active site. The interval Gln-256–Arg-260 is ACP-binding. Asn-285 is an active-site residue.

The protein belongs to the thiolase-like superfamily. FabH family. As to quaternary structure, homodimer.

It localises to the cytoplasm. It catalyses the reaction malonyl-[ACP] + acetyl-CoA + H(+) = 3-oxobutanoyl-[ACP] + CO2 + CoA. Its pathway is lipid metabolism; fatty acid biosynthesis. Functionally, catalyzes the condensation reaction of fatty acid synthesis by the addition to an acyl acceptor of two carbons from malonyl-ACP. Catalyzes the first condensation reaction which initiates fatty acid synthesis and may therefore play a role in governing the total rate of fatty acid production. Possesses both acetoacetyl-ACP synthase and acetyl transacylase activities. Its substrate specificity determines the biosynthesis of branched-chain and/or straight-chain of fatty acids. The chain is Beta-ketoacyl-[acyl-carrier-protein] synthase III from Polynucleobacter asymbioticus (strain DSM 18221 / CIP 109841 / QLW-P1DMWA-1) (Polynucleobacter necessarius subsp. asymbioticus).